Here is a 209-residue protein sequence, read N- to C-terminus: A-type ATP synthase subunit D (209 aa).

It belongs to the V-ATPase D subunit family. In terms of assembly, has multiple subunits with at least A(3), B(3), C, D, E, F, H, I and proteolipid K(x).

The protein resides in the cell membrane. Its function is as follows. Component of the A-type ATP synthase that produces ATP from ADP in the presence of a proton gradient across the membrane. This is A-type ATP synthase subunit D from Sulfolobus acidocaldarius (strain ATCC 33909 / DSM 639 / JCM 8929 / NBRC 15157 / NCIMB 11770).